A 301-amino-acid polypeptide reads, in one-letter code: NADH-cytochrome b5 reductase 3 (301 aa).

The N-myristoyl glycine moiety is linked to residue glycine 2. An FAD-binding FR-type domain is found at 40-152 (DIKYPLRLID…RGPSGLLVYQ (113 aa)). Lysine 42 carries the post-translational modification N6-acetyllysine. Residue tyrosine 43 is modified to Phosphotyrosine. Positions 92, 93, 94, 109, 111, and 114 each coordinate FAD. N6-acetyllysine is present on lysine 120. The FAD site is built by lysine 126, methionine 127, serine 128, and threonine 185.

It belongs to the flavoprotein pyridine nucleotide cytochrome reductase family. In terms of assembly, component of a complex composed of cytochrome b5, NADH-cytochrome b5 reductase (CYB5R3) and MTARC2. Interacts with MTLN; the interaction is required to maintain cellular lipid composition and leads to stimulation of mitochondrial respiratory complex I activity. FAD is required as a cofactor. Expressed at late stages of erythroid maturation.

The protein resides in the endoplasmic reticulum membrane. It localises to the mitochondrion outer membrane. The protein localises to the cytoplasm. The enzyme catalyses 2 Fe(III)-[cytochrome b5] + NADH = 2 Fe(II)-[cytochrome b5] + NAD(+) + H(+). In terms of biological role, catalyzes the reduction of two molecules of cytochrome b5 using NADH as the electron donor. The protein is NADH-cytochrome b5 reductase 3 of Homo sapiens (Human).